Reading from the N-terminus, the 249-residue chain is Orotidine 5'-phosphate decarboxylase (249 aa).

Substrate is bound by residues D21, K43, 72–81 (DLKLYDIPET), T128, R193, Q204, G224, and R225. K74 acts as the Proton donor in catalysis.

The protein belongs to the OMP decarboxylase family. Type 1 subfamily. As to quaternary structure, homodimer.

It catalyses the reaction orotidine 5'-phosphate + H(+) = UMP + CO2. It participates in pyrimidine metabolism; UMP biosynthesis via de novo pathway; UMP from orotate: step 2/2. Its function is as follows. Catalyzes the decarboxylation of orotidine 5'-monophosphate (OMP) to uridine 5'-monophosphate (UMP). The sequence is that of Orotidine 5'-phosphate decarboxylase from Desulfosudis oleivorans (strain DSM 6200 / JCM 39069 / Hxd3) (Desulfococcus oleovorans).